The chain runs to 918 residues: Eukaryotic translation initiation factor 3 subunit C (918 aa).

The disordered stretch occupies residues 1–174 (MSRFFKGGSS…EEEGRRVVKS (174 aa)). A phosphoserine mark is found at Ser-10, Ser-12, Ser-16, Ser-19, and Ser-20. Acidic residues-rich tracts occupy residues 36–47 (SSSEEESSEEES), 54–67 (ESSE…ESEV), and 79–128 (EDSE…ESDE). At Thr-667 the chain carries Phosphothreonine. The PCI domain maps to 681 to 856 (FHMHINLELL…GAIIFERVEI (176 aa)). Residues 879 to 918 (KLYEQKTQHTNPQENRRRDKGGSVKRRNERTENRNRSDMN) form a disordered region. Positions 907–918 (ERTENRNRSDMN) are enriched in basic and acidic residues.

It belongs to the eIF-3 subunit C family. Component of the eukaryotic translation initiation factor 3 (eIF-3) complex. The eIF-3 complex appears to include tif32/eif3a, SPAC25G10.08/eif3b, tif33/eif3c, SPBC4C3.07/eif3f, tif35/eif3g and sum1/eif3i. This set of common subunits may also associate exclusively with either moe1/eif3d and int6/eif3e, or with SPAC821.05/eif3h and SPAC1751.03/eif3m. The eIF-3 complex may also include SPAC3A12.13c/eif3j.

It localises to the cytoplasm. Its function is as follows. Component of the eukaryotic translation initiation factor 3 (eIF-3) complex, which is involved in protein synthesis of a specialized repertoire of mRNAs and, together with other initiation factors, stimulates binding of mRNA and methionyl-tRNAi to the 40S ribosome. The eIF-3 complex specifically targets and initiates translation of a subset of mRNAs involved in cell proliferation. This Schizosaccharomyces pombe (strain 972 / ATCC 24843) (Fission yeast) protein is Eukaryotic translation initiation factor 3 subunit C (nip1).